Reading from the N-terminus, the 89-residue chain is Large ribosomal subunit protein bL28 (89 aa).

It belongs to the bacterial ribosomal protein bL28 family.

In Chlamydia pneumoniae (Chlamydophila pneumoniae), this protein is Large ribosomal subunit protein bL28.